Reading from the N-terminus, the 533-residue chain is Beta-glucosidase 10 (533 aa).

The N-terminal stretch at 1 to 23 is a signal peptide; that stretch reads MAVAGAMVMSGGVLLLLLAFTCA. Gln53 contributes to the a beta-D-glucoside binding site. Asn122 carries an N-linked (GlcNAc...) asparagine glycan. Residues His157 and 202-203 each bind a beta-D-glucoside; that span reads NE. The Proton donor role is filled by Glu203. Cys222 and Cys230 are oxidised to a cystine. Position 369 (Tyr369) interacts with a beta-D-glucoside. A glycan (N-linked (GlcNAc...) asparagine) is linked at Asn384. Glu440 serves as a coordination point for a beta-D-glucoside. The active-site Nucleophile is Glu440. An N-linked (GlcNAc...) asparagine glycan is attached at Asn448. A beta-D-glucoside is bound by residues Trp489, 496–497, and Phe505; that span reads EW.

It belongs to the glycosyl hydrolase 1 family.

It catalyses the reaction Hydrolysis of terminal, non-reducing beta-D-glucosyl residues with release of beta-D-glucose.. This chain is Beta-glucosidase 10 (BGLU10), found in Oryza sativa subsp. japonica (Rice).